A 3027-amino-acid polypeptide reads, in one-letter code: DmX-like protein 1 (3027 aa).

3 WD repeats span residues 108–145 (FLES…KPTE), 166–206 (KTAS…RTAV), and 229–277 (AHPR…NDCL). Phosphoserine is present on residues Ser324, Ser422, Ser425, and Ser436. Polar residues predominate over residues 420–433 (PSSEASVEDSNQAD). The disordered stretch occupies residues 420–450 (PSSEASVEDSNQADVKSDEETDDGVDDLKIN). Residues 476-516 (DHQIEVLLSEWSKNADMLFSIHPMDGSLLVWHVDWLDEYQP) form a WD 4 repeat. Residues 563–584 (KQKPSGLTRSTSMLISSGHNKS) form a disordered region. Ser574 carries the post-translational modification Phosphoserine. 3 WD repeats span residues 580–621 (GHNK…ESAF), 628–665 (SHKS…RTPD), and 848–895 (GKDS…IPVS). Ser918 and Ser924 each carry phosphoserine. WD repeat units follow at residues 968–1010 (PSAG…GESA), 1134–1175 (SNTK…VQDQ), and 1211–1251 (GSPP…EPVI). Residues Ser1830, Ser1896, Ser1908, and Ser1970 each carry the phosphoserine modification. 2 disordered regions span residues 2367–2412 (PSKE…SSAP) and 2446–2468 (SRAE…DDDD). Residues 2451-2468 (DSEESLGSDDDDNDDDDD) are compositionally biased toward acidic residues. 6 WD repeats span residues 2742–2783 (KAIN…TCFR), 2785–2824 (GGNS…CPVT), 2836–2878 (CHNK…ANSL), 2884–2923 (CHDS…QRQL), 2926–2965 (SHDS…LLHT), and 2978–3016 (NIGT…SPLN).

Expressed in bone, breast, eye, foreskin, heart, parathyroid, small intestine, testis, tonsils, placenta and uterus.

The sequence is that of DmX-like protein 1 (DMXL1) from Homo sapiens (Human).